The following is a 496-amino-acid chain: NADP-dependent glyceraldehyde-3-phosphate dehydrogenase (496 aa).

Residues Arg-116 and Asn-169–Tyr-170 each bind substrate. Residues Lys-192, Thr-195, and Asp-230 each coordinate NADP(+). An NAD(+)-binding site is contributed by Gly-245–Gly-249. Glu-264 (proton acceptor) is an active-site residue. Arg-297–Thr-299 contacts substrate. The active-site Nucleophile is Cys-298. Glu-391 serves as a coordination point for NADP(+). Arg-451 contributes to the substrate binding site.

The protein belongs to the aldehyde dehydrogenase family.

The protein localises to the cytoplasm. It catalyses the reaction D-glyceraldehyde 3-phosphate + NADP(+) + H2O = (2R)-3-phosphoglycerate + NADPH + 2 H(+). Functionally, important as a means of generating NADPH for biosynthetic reactions. This is NADP-dependent glyceraldehyde-3-phosphate dehydrogenase (GAPN) from Nicotiana plumbaginifolia (Leadwort-leaved tobacco).